Reading from the N-terminus, the 366-residue chain is NADH-quinone oxidoreductase subunit D (366 aa).

This sequence belongs to the complex I 49 kDa subunit family. In terms of assembly, NDH-1 is composed of 14 different subunits. Subunits NuoB, C, D, E, F, and G constitute the peripheral sector of the complex.

It localises to the cell membrane. It carries out the reaction a quinone + NADH + 5 H(+)(in) = a quinol + NAD(+) + 4 H(+)(out). In terms of biological role, NDH-1 shuttles electrons from NADH, via FMN and iron-sulfur (Fe-S) centers, to quinones in the respiratory chain. The immediate electron acceptor for the enzyme in this species is believed to be a menaquinone. Couples the redox reaction to proton translocation (for every two electrons transferred, four hydrogen ions are translocated across the cytoplasmic membrane), and thus conserves the redox energy in a proton gradient. This is NADH-quinone oxidoreductase subunit D from Bacillus cytotoxicus (strain DSM 22905 / CIP 110041 / 391-98 / NVH 391-98).